The primary structure comprises 261 residues: Imidazole glycerol phosphate synthase subunit HisF (261 aa).

Active-site residues include D16 and D135.

It belongs to the HisA/HisF family. As to quaternary structure, heterodimer of HisH and HisF.

The protein localises to the cytoplasm. The enzyme catalyses 5-[(5-phospho-1-deoxy-D-ribulos-1-ylimino)methylamino]-1-(5-phospho-beta-D-ribosyl)imidazole-4-carboxamide + L-glutamine = D-erythro-1-(imidazol-4-yl)glycerol 3-phosphate + 5-amino-1-(5-phospho-beta-D-ribosyl)imidazole-4-carboxamide + L-glutamate + H(+). The protein operates within amino-acid biosynthesis; L-histidine biosynthesis; L-histidine from 5-phospho-alpha-D-ribose 1-diphosphate: step 5/9. In terms of biological role, IGPS catalyzes the conversion of PRFAR and glutamine to IGP, AICAR and glutamate. The HisF subunit catalyzes the cyclization activity that produces IGP and AICAR from PRFAR using the ammonia provided by the HisH subunit. The protein is Imidazole glycerol phosphate synthase subunit HisF of Mycobacterium sp. (strain JLS).